We begin with the raw amino-acid sequence, 226 residues long: Lysoplasmalogenase TMEM86B (226 aa).

The Cytoplasmic portion of the chain corresponds to 1–23 (MDAGKAGQTLKTHCSAQRPDVCR). Residues 24–40 (WLSPFILSCCVYFCLWI) traverse the membrane as a helical segment. Residues 41–46 (PEDQLS) lie on the Extracellular side of the membrane. Residues 47 to 67 (WFAALVKCLPVLCLAGFLWVM) form a helical membrane-spanning segment. At 68-75 (SPSGGYTQ) the chain is on the cytoplasmic side. The chain crosses the membrane as a helical span at residues 76–93 (LLQGALVCSAVGDACLIW). At 94-100 (PAAFVPG) the chain is on the extracellular side. A helical membrane pass occupies residues 101 to 117 (MAAFATAHLLYVWAFGF). At 118-123 (SPLQPG) the chain is on the cytoplasmic side. The helical transmembrane segment at 124 to 140 (LLLLIILAPGPYLSLVL) threads the bilayer. Residues 141-146 (QHLEPD) are Extracellular-facing. Residues 147-163 (MVLPVAAYGLILMAMLW) traverse the membrane as a helical segment. The Cytoplasmic segment spans residues 164-171 (RGLAQGGS). The helical transmembrane segment at 172–188 (AGWGALLFTLSDGVLAW) threads the bilayer. Residues 189-199 (DTFAQPLPHAH) are Extracellular-facing. A helical membrane pass occupies residues 200–218 (LVIMTTYYAAQLLITLSAL). The Cytoplasmic segment spans residues 219-226 (RSPVPKTD).

This sequence belongs to the TMEM86 family. Homodimer.

Its subcellular location is the endoplasmic reticulum membrane. It localises to the cytoplasm. The catalysed reaction is a 1-O-(1Z-alkenyl)-sn-glycero-3-phosphocholine + H2O = a 2,3-saturated aldehyde + sn-glycerol 3-phosphocholine. The enzyme catalyses a 1-O-(1Z-alkenyl)-sn-glycero-3-phosphoethanolamine + H2O = a 2,3-saturated aldehyde + sn-glycero-3-phosphoethanolamine. Competitively inhibited by lysophosphatidic acid. Catalyzes the hydrolysis of the vinyl ether bond of choline or ethanolamine lysoplasmalogens, forming fatty aldehyde and glycerophosphocholine or glycerophosphoethanolamine, respectively and is specific for the sn-2-deacylated (lyso) form of plasmalogen. In Homo sapiens (Human), this protein is Lysoplasmalogenase TMEM86B (TMEM86B).